Reading from the N-terminus, the 497-residue chain is Cytochrome P450 2D6 (497 aa).

Aspartate 301 contributes to the substrate binding site. Heme is bound at residue cysteine 443.

It belongs to the cytochrome P450 family. Requires heme as cofactor.

It localises to the endoplasmic reticulum membrane. Its subcellular location is the microsome membrane. The enzyme catalyses (5Z,8Z,11Z,14Z)-eicosatetraenoate + reduced [NADPH--hemoprotein reductase] + O2 = (8R,9S)-epoxy-(5Z,11Z,14Z)-eicosatrienoate + oxidized [NADPH--hemoprotein reductase] + H2O + H(+). The catalysed reaction is (5Z,8Z,11Z,14Z)-eicosatetraenoate + reduced [NADPH--hemoprotein reductase] + O2 = (11R,12S)-epoxy-(5Z,8Z,14Z)-eicosatrienoate + oxidized [NADPH--hemoprotein reductase] + H2O + H(+). It carries out the reaction (5Z,8Z,11Z,14Z)-eicosatetraenoate + reduced [NADPH--hemoprotein reductase] + O2 = (14S,15R)-epoxy-(5Z,8Z,11Z)-eicosatrienoate + oxidized [NADPH--hemoprotein reductase] + H2O + H(+). It catalyses the reaction N-(5Z,8Z,11Z,14Z-eicosatetraenoyl)-ethanolamine + reduced [NADPH--hemoprotein reductase] + O2 = N-(8,9-epoxy-5Z,11Z,14Z-eicosatrienoyl)-ethanolamine + oxidized [NADPH--hemoprotein reductase] + H2O + H(+). The enzyme catalyses N-(5Z,8Z,11Z,14Z-eicosatetraenoyl)-ethanolamine + reduced [NADPH--hemoprotein reductase] + O2 = N-(11,12-epoxy-5Z,8Z,14Z-eicosatrienoyl)-ethanolamine + oxidized [NADPH--hemoprotein reductase] + H2O + H(+). The catalysed reaction is N-(5Z,8Z,11Z,14Z-eicosatetraenoyl)-ethanolamine + reduced [NADPH--hemoprotein reductase] + O2 = N-(14,15-epoxy-5Z,8Z,11Z-eicosatrienoyl)-ethanolamine + oxidized [NADPH--hemoprotein reductase] + H2O + H(+). It carries out the reaction N-(5Z,8Z,11Z,14Z-eicosatetraenoyl)-ethanolamine + reduced [NADPH--hemoprotein reductase] + O2 = N-(20-hydroxy-5Z,8Z,11Z,14Z-eicosatetraenoyl)-ethanolamine + oxidized [NADPH--hemoprotein reductase] + H2O + H(+). It catalyses the reaction (5Z,8Z,11Z,14Z,17Z)-eicosapentaenoate + reduced [NADPH--hemoprotein reductase] + O2 = (17S,18R)-epoxy-(5Z,8Z,11Z,14Z)-eicosatetraenoate + oxidized [NADPH--hemoprotein reductase] + H2O + H(+). The enzyme catalyses (4Z,7Z,10Z,13Z,16Z,19Z)-docosahexaenoate + reduced [NADPH--hemoprotein reductase] + O2 = (19R,20S)-epoxy-(4Z,7Z,10Z,13Z,16Z)-docosapentaenoate + oxidized [NADPH--hemoprotein reductase] + H2O + H(+). The catalysed reaction is (4Z,7Z,10Z,13Z,16Z,19Z)-docosahexaenoate + reduced [NADPH--hemoprotein reductase] + O2 = (19S,20R)-epoxy-(4Z,7Z,10Z,13Z,16Z)-docosapentaenoate + oxidized [NADPH--hemoprotein reductase] + H2O + H(+). It carries out the reaction cholesterol + reduced [NADPH--hemoprotein reductase] + O2 = 25-hydroxycholesterol + oxidized [NADPH--hemoprotein reductase] + H2O + H(+). It catalyses the reaction all-trans-retinol + reduced [NADPH--hemoprotein reductase] + O2 = all-trans-retinal + oxidized [NADPH--hemoprotein reductase] + 2 H2O + H(+). It functions in the pathway cofactor metabolism; retinol metabolism. Its pathway is lipid metabolism; fatty acid metabolism. The protein operates within steroid metabolism; cholesterol metabolism. Its function is as follows. A cytochrome P450 monooxygenase involved in the metabolism of fatty acids, steroids and retinoids. Mechanistically, uses molecular oxygen inserting one oxygen atom into a substrate, and reducing the second into a water molecule, with two electrons provided by NADPH via cytochrome P450 reductase (NADPH--hemoprotein reductase). Catalyzes the epoxidation of double bonds of polyunsaturated fatty acids (PUFA). Metabolizes endocannabinoid arachidonoylethanolamide (anandamide) to 20-hydroxyeicosatetraenoic acid ethanolamide (20-HETE-EA) and 8,9-, 11,12-, and 14,15-epoxyeicosatrienoic acid ethanolamides (EpETrE-EAs), potentially modulating endocannabinoid system signaling. Catalyzes the hydroxylation of carbon-hydrogen bonds. Metabolizes cholesterol toward 25-hydroxycholesterol, a physiological regulator of cellular cholesterol homeostasis. Catalyzes the oxidative transformations of all-trans retinol to all-trans retinal, a precursor for the active form all-trans-retinoic acid. Also involved in the oxidative metabolism of drugs such as antiarrhythmics, adrenoceptor antagonists, and tricyclic antidepressants. The polypeptide is Cytochrome P450 2D6 (CYP2D6) (Pan troglodytes (Chimpanzee)).